The primary structure comprises 114 residues: Somatostatin-1A (114 aa).

The first 24 residues, 1–24 (MLSTRIQCALALLSLALAVCSVSA), serve as a signal peptide directing secretion. Residues 25 to 88 (APTDAKLRQL…KDEVRLELER (64 aa)) constitute a propeptide that is removed on maturation. Cys103 and Cys114 are disulfide-bonded.

Belongs to the somatostatin family.

It localises to the secreted. In terms of biological role, somatostatin inhibits the release of somatotropin. This chain is Somatostatin-1A (sst1a), found in Carassius auratus (Goldfish).